The chain runs to 238 residues: Capsular polysaccharide phosphotransferase eps5J (238 aa).

Belongs to the stealth family.

This Streptococcus thermophilus protein is Capsular polysaccharide phosphotransferase eps5J (eps5J).